A 221-amino-acid chain; its full sequence is Cyclin-U3-1 (221 aa).

This sequence belongs to the cyclin family. Cyclin U/P subfamily. As to quaternary structure, interacts with CDKA-1 and CDKB1-1. As to expression, expressed in roots, stems and flowers. Expressed in the shoot apex, leaf primordia and young leaves.

The sequence is that of Cyclin-U3-1 (CYCU3-1) from Arabidopsis thaliana (Mouse-ear cress).